The following is a 205-amino-acid chain: Ribonuclease HII (205 aa).

One can recognise an RNase H type-2 domain in the interval 14-205; sequence SLISGIDEAG…SFRLKQLGEK (192 aa). 3 residues coordinate a divalent metal cation: Asp20, Glu21, and Asp117.

The protein belongs to the RNase HII family. Mn(2+) serves as cofactor. Requires Mg(2+) as cofactor.

The protein resides in the cytoplasm. The catalysed reaction is Endonucleolytic cleavage to 5'-phosphomonoester.. Functionally, endonuclease that specifically degrades the RNA of RNA-DNA hybrids. The chain is Ribonuclease HII from Chlorobium phaeobacteroides (strain DSM 266 / SMG 266 / 2430).